The sequence spans 1005 residues: Espin-like protein (1005 aa).

ANK repeat units follow at residues 1-31 (MEKQ…GPGI), 35-64 (LGAG…LPGN), 69-99 (NGAT…GLQD), 103-132 (SGVS…SATL), 136-166 (EGAR…SVNR), 170-200 (SGAS…DVHL), 204-234 (DGMS…GLTA), 238-267 (EGAT…PILR), and 270-299 (WGGT…DPSL). 2 disordered regions span residues 333-444 (LMTP…ERGQ) and 462-483 (LGAE…TEQA). Pro residues predominate over residues 334-346 (MTPPPPPFPPPPL). Residues 468-480 (AEAQDNGGSSGPT) are compositionally biased toward polar residues. A coiled-coil region spans residues 517-541 (LQLRRRCQEYESELGRLAAELQALL). Disordered stretches follow at residues 616–644 (GDEK…AQRQ), 695–730 (RSGL…AAAG), and 773–795 (LRGQ…PRLG).

As to quaternary structure, interacts with MYO3A (via C-terminus). Interacts with MYO3B (via C-terminus).

It is found in the cell projection. Its subcellular location is the stereocilium. In terms of biological role, binds to but does not cross-link actin. Required for the formation and maintenance of inner ear hair cell stereocilia and staircase formation. Essential for normal hearing. This is Espin-like protein (ESPNL) from Homo sapiens (Human).